We begin with the raw amino-acid sequence, 72 residues long: Heat shock factor-binding protein 1-like protein 1 (72 aa).

Residues 12–62 (DLLQNAAENLLLEVEEHFQALTTTLNLRMEEMGSRIEDLQRNVDDLMTQAG) are a coiled coil.

The protein belongs to the HSBP1 family.

The protein is Heat shock factor-binding protein 1-like protein 1 (Hsbp1l1) of Mus musculus (Mouse).